Reading from the N-terminus, the 284-residue chain is Pseudopaline exporter CntI (284 aa).

The next 10 membrane-spanning stretches (helical) occupy residues 2–22 (VLDLLKSGVLLAVLASFTFSV), 34–54 (LPAAEIVFFRSAIGTLLIYLL), 74–94 (GVMGALYLVCYFYAIAHIPLA), 96–116 (ASILAHMSPFFVILFSALFLG), 122–142 (AVYWLLLVVVLGALMIVKPFS), 147–167 (SVYAVVGLLSAVFAAGASVAI), 179–199 (IVFYFLAVATLVAIPLMWSDF), 209–229 (GLLLAIGVVSLLGQVFLTRAF), 236–256 (IVAVTRYIGIVFNAGWGWLFW), and 259–279 (VPDALTIAGGVLIVVACIALS). EamA domains are found at residues 8 to 138 (SGVL…LMIV) and 151 to 279 (VVGL…IALS).

It belongs to the EamA transporter family.

It is found in the cell inner membrane. Functionally, transports the metallophore pseudopaline, which is involved in the acquisition of nickel and zinc, and thus enables bacterial growth inside the host, where metal access is limited. Is probably involved in the export of pseudopaline. This Pseudomonas aeruginosa (strain UCBPP-PA14) protein is Pseudopaline exporter CntI.